The sequence spans 366 residues: NADH-quinone oxidoreductase subunit D (366 aa).

This sequence belongs to the complex I 49 kDa subunit family. As to quaternary structure, NDH-1 is composed of 14 different subunits. Subunits NuoB, C, D, E, F, and G constitute the peripheral sector of the complex.

It localises to the cell membrane. The catalysed reaction is a quinone + NADH + 5 H(+)(in) = a quinol + NAD(+) + 4 H(+)(out). Functionally, NDH-1 shuttles electrons from NADH, via FMN and iron-sulfur (Fe-S) centers, to quinones in the respiratory chain. The immediate electron acceptor for the enzyme in this species is believed to be a menaquinone. Couples the redox reaction to proton translocation (for every two electrons transferred, four hydrogen ions are translocated across the cytoplasmic membrane), and thus conserves the redox energy in a proton gradient. In Bacillus mycoides (strain KBAB4) (Bacillus weihenstephanensis), this protein is NADH-quinone oxidoreductase subunit D.